The following is a 514-amino-acid chain: Maturase K (514 aa).

The protein belongs to the intron maturase 2 family. MatK subfamily.

It is found in the plastid. Its subcellular location is the chloroplast. Its function is as follows. Usually encoded in the trnK tRNA gene intron. Probably assists in splicing its own and other chloroplast group II introns. The sequence is that of Maturase K from Erythronium grandiflorum (Yellow avalanche-lily).